We begin with the raw amino-acid sequence, 476 residues long: Eukaryotic translation initiation factor 3 subunit L (476 aa).

A PCI domain is found at D257–L452.

It belongs to the eIF-3 subunit L family. Component of the eukaryotic translation initiation factor 3 (eIF-3) complex.

The protein resides in the cytoplasm. Functionally, component of the eukaryotic translation initiation factor 3 (eIF-3) complex, which is involved in protein synthesis of a specialized repertoire of mRNAs and, together with other initiation factors, stimulates binding of mRNA and methionyl-tRNAi to the 40S ribosome. The eIF-3 complex specifically targets and initiates translation of a subset of mRNAs involved in cell proliferation. This Aspergillus terreus (strain NIH 2624 / FGSC A1156) protein is Eukaryotic translation initiation factor 3 subunit L.